The chain runs to 94 residues: Small ribosomal subunit protein uS19 (94 aa).

Belongs to the universal ribosomal protein uS19 family.

Its function is as follows. Protein S19 forms a complex with S13 that binds strongly to the 16S ribosomal RNA. The sequence is that of Small ribosomal subunit protein uS19 from Clostridium botulinum (strain Langeland / NCTC 10281 / Type F).